The primary structure comprises 672 residues: Poly-beta-1,6-N-acetyl-D-glucosamine N-deacetylase (672 aa).

A signal peptide spans 1-20; sequence MLRNGNKYLLMLVSIIMLTA. The N-palmitoyl cysteine moiety is linked to residue Cys-21. A lipid anchor (S-diacylglycerol cysteine) is attached at Cys-21. In terms of domain architecture, NodB homology spans 107–349; the sequence is KAVVLTFDDG…IQRVKDMQIS (243 aa).

Belongs to the polysaccharide deacetylase family.

It is found in the cell outer membrane. In terms of biological role, catalyzes the N-deacetylation of poly-beta-1,6-N-acetyl-D-glucosamine (PGA), a biofilm adhesin polysaccharide. N-deacetylation promotes PGA export through the PgaA porin. The sequence is that of Poly-beta-1,6-N-acetyl-D-glucosamine N-deacetylase (pgaB) from Escherichia coli O157:H7.